The chain runs to 426 residues: Serine--tRNA ligase (426 aa).

Residue 231-233 (TSE) participates in L-serine binding. 262–264 (RSE) contacts ATP. Glu285 contributes to the L-serine binding site. 349 to 352 (EISS) is a binding site for ATP. An L-serine-binding site is contributed by Ser385.

Belongs to the class-II aminoacyl-tRNA synthetase family. Type-1 seryl-tRNA synthetase subfamily. As to quaternary structure, homodimer. The tRNA molecule binds across the dimer.

It is found in the cytoplasm. It carries out the reaction tRNA(Ser) + L-serine + ATP = L-seryl-tRNA(Ser) + AMP + diphosphate + H(+). The enzyme catalyses tRNA(Sec) + L-serine + ATP = L-seryl-tRNA(Sec) + AMP + diphosphate + H(+). Its pathway is aminoacyl-tRNA biosynthesis; selenocysteinyl-tRNA(Sec) biosynthesis; L-seryl-tRNA(Sec) from L-serine and tRNA(Sec): step 1/1. Functionally, catalyzes the attachment of serine to tRNA(Ser). Is also able to aminoacylate tRNA(Sec) with serine, to form the misacylated tRNA L-seryl-tRNA(Sec), which will be further converted into selenocysteinyl-tRNA(Sec). This Legionella pneumophila (strain Lens) protein is Serine--tRNA ligase.